Here is a 325-residue protein sequence, read N- to C-terminus: Cytochrome c1, heme protein, mitochondrial (325 aa).

The transit peptide at 1–84 (MAAAAATLRG…AVALHSAVSA (84 aa)) directs the protein to the mitochondrion. Topologically, residues 85-281 (SDLELHPPSY…TFLRWAAEPE (197 aa)) are mitochondrial intermembrane. The region spanning 108 to 209 (TSIRRGFQVY…IVRARHGGED (102 aa)) is the Cytochrome c domain. The heme c site is built by Cys-121, Cys-124, His-125, and Met-244. Residues 282 to 315 (HDHRKRMGLKMLLMMGLLLPLVYAMKRHKWSVLK) traverse the membrane as a helical segment. The Mitochondrial matrix segment spans residues 316 to 325 (SRKLAYRPPK).

The protein belongs to the cytochrome c family. As to quaternary structure, component of the ubiquinol-cytochrome c oxidoreductase (cytochrome b-c1 complex, complex III, CIII), a multisubunit enzyme composed of 11 subunits. The complex is composed of 3 respiratory subunits cytochrome b, cytochrome c1 and Rieske protein UQCRFS1, 2 core protein subunits UQCRC1/QCR1 and UQCRC2/QCR2, and 6 low-molecular weight protein subunits UQCRH/QCR6, UQCRB/QCR7, UQCRQ/QCR8, UQCR10/QCR9, UQCR11/QCR10 and subunit 9, the cleavage product of Rieske protein UQCRFS1. The complex exists as an obligatory dimer and forms supercomplexes (SCs) in the inner mitochondrial membrane with NADH-ubiquinone oxidoreductase (complex I, CI) and cytochrome c oxidase (complex IV, CIV), resulting in different assemblies (supercomplex SCI(1)III(2)IV(1) and megacomplex MCI(2)III(2)IV(2)). Interacts with FLVCR2; this interaction occurs in the absence of heme and is disrupted upon heme binding. Heme c serves as cofactor.

The protein resides in the mitochondrion inner membrane. It carries out the reaction a quinol + 2 Fe(III)-[cytochrome c](out) = a quinone + 2 Fe(II)-[cytochrome c](out) + 2 H(+)(out). Its function is as follows. Component of the ubiquinol-cytochrome c oxidoreductase, a multisubunit transmembrane complex that is part of the mitochondrial electron transport chain which drives oxidative phosphorylation. The respiratory chain contains 3 multisubunit complexes succinate dehydrogenase (complex II, CII), ubiquinol-cytochrome c oxidoreductase (cytochrome b-c1 complex, complex III, CIII) and cytochrome c oxidase (complex IV, CIV), that cooperate to transfer electrons derived from NADH and succinate to molecular oxygen, creating an electrochemical gradient over the inner membrane that drives transmembrane transport and the ATP synthase. The cytochrome b-c1 complex catalyzes electron transfer from ubiquinol to cytochrome c, linking this redox reaction to translocation of protons across the mitochondrial inner membrane, with protons being carried across the membrane as hydrogens on the quinol. In the process called Q cycle, 2 protons are consumed from the matrix, 4 protons are released into the intermembrane space and 2 electrons are passed to cytochrome c. Cytochrome c1 is a catalytic core subunit containing a c-type heme. It transfers electrons from the [2Fe-2S] iron-sulfur cluster of the Rieske protein to cytochrome c. This chain is Cytochrome c1, heme protein, mitochondrial (CYC1), found in Bos taurus (Bovine).